The chain runs to 180 residues: Protein SPMIP9 (180 aa).

In terms of assembly, microtubule inner protein component of sperm flagellar doublet microtubules. As to expression, only detected after the mouse is 35 days old. Expression increases gradually from day 35 to 6 months, and remains stable after 54 days. Exclusively expressed in the epididymis and testis.

It is found in the nucleus. Its subcellular location is the cytoplasm. The protein localises to the cytoskeleton. It localises to the flagellum axoneme. In terms of biological role, microtubule inner protein (MIP) part of the dynein-decorated doublet microtubules (DMTs) in flagella axoneme. The polypeptide is Protein SPMIP9 (Spmip9) (Mus musculus (Mouse)).